Consider the following 139-residue polypeptide: Low molecular weight protein-tyrosine-phosphatase PtpB (139 aa).

The active-site Nucleophile is Cys-7. Residue Arg-13 is part of the active site. Asp-111 functions as the Proton donor in the catalytic mechanism.

Belongs to the low molecular weight phosphotyrosine protein phosphatase family.

The enzyme catalyses O-phospho-L-tyrosyl-[protein] + H2O = L-tyrosyl-[protein] + phosphate. Its function is as follows. Dephosphorylates the phosphotyrosine-containing proteins. The sequence is that of Low molecular weight protein-tyrosine-phosphatase PtpB (ptpB) from Staphylococcus epidermidis (strain ATCC 35984 / DSM 28319 / BCRC 17069 / CCUG 31568 / BM 3577 / RP62A).